A 96-amino-acid chain; its full sequence is Large ribosomal subunit protein bL25 (96 aa).

This sequence belongs to the bacterial ribosomal protein bL25 family. As to quaternary structure, part of the 50S ribosomal subunit; part of the 5S rRNA/L5/L18/L25 subcomplex. Contacts the 5S rRNA. Binds to the 5S rRNA independently of L5 and L18.

This is one of the proteins that binds to the 5S RNA in the ribosome where it forms part of the central protuberance. This Francisella philomiragia subsp. philomiragia (strain ATCC 25017 / CCUG 19701 / FSC 153 / O#319-036) protein is Large ribosomal subunit protein bL25.